A 301-amino-acid polypeptide reads, in one-letter code: rRNA methyltransferase 1, mitochondrial (301 aa).

Residues 1 to 11 (MIRSRVNLARE) constitute a mitochondrion transit peptide. Residues 121–141 (YNNKNGQDSPHNDLNEGKSSS) are disordered.

This sequence belongs to the class IV-like SAM-binding methyltransferase superfamily. RNA methyltransferase TrmH family.

It localises to the mitochondrion. It carries out the reaction a guanosine in 21S rRNA + S-adenosyl-L-methionine = a 2'-O-methylguanosine in 21S rRNA + S-adenosyl-L-homocysteine + H(+). Functionally, S-adenosyl-L-methionine-dependent 2'-O-ribose methyltransferase that catalyzes the formation of the 2'-O-methylguanosine corresponding to position 2270 in S.cerevisiae 21S mitochondrial large subunit ribosomal RNA (mtLSU rRNA), a universally conserved modification in the peptidyl transferase domain of the mtLSU rRNA. In Schizosaccharomyces pombe (strain 972 / ATCC 24843) (Fission yeast), this protein is rRNA methyltransferase 1, mitochondrial.